The following is a 733-amino-acid chain: Protein ROG3 (733 aa).

Residues 460-463 carry the PY-motif motif; that stretch reads PPNY. The disordered stretch occupies residues 518–566; that stretch reads RDNLGLPPSASSAAASRSLSPLLNVPAPEDGTERILPQSALGPNSGSVP. The segment covering 523 to 540 has biased composition (low complexity); the sequence is LPPSASSAAASRSLSPLL. The short motif at 625 to 628 is the PY-motif element; that stretch reads PPSY. Disordered regions lie at residues 636–658 and 693–733; these read QPRKPSRVHSRNSSTTLSSSIPT and ELTS…GNKR. Positions 646-658 are enriched in low complexity; sequence RNSSTTLSSSIPT.

Belongs to the arrestin family. Interacts with RSP5 via its 2 PY-motifs.

Its function is as follows. Involved in resistance to GST substrate o-dinitrobenzene (o-DNB). The sequence is that of Protein ROG3 (ROG3) from Saccharomyces cerevisiae (strain ATCC 204508 / S288c) (Baker's yeast).